Consider the following 593-residue polypeptide: Brain-enriched guanylate kinase-associated protein (593 aa).

An N-acetylmethionine modification is found at Met-1. Tyr-137 is modified (phosphotyrosine). Phosphoserine occurs at positions 200, 229, 246, 265, 346, and 373. An Asymmetric dimethylarginine modification is found at Arg-381. Residues Ser-455, Ser-465, Ser-475, Ser-477, Ser-500, Ser-502, Ser-506, Ser-553, and Ser-563 each carry the phosphoserine modification. Residues Leu-499–Asn-593 are disordered.

Interacts with DLG4 and DLGAP1 and forms a ternary complex.

The protein localises to the cytoplasm. The protein resides in the membrane. In terms of biological role, may sustain the structure of the postsynaptic density (PSD). The chain is Brain-enriched guanylate kinase-associated protein (BEGAIN) from Homo sapiens (Human).